Consider the following 610-residue polypeptide: Elongation factor 4 (610 aa).

In terms of domain architecture, tr-type G spans glutamine 11–threonine 193. Residues aspartate 23–threonine 28 and asparagine 140–aspartate 143 contribute to the GTP site.

It belongs to the TRAFAC class translation factor GTPase superfamily. Classic translation factor GTPase family. LepA subfamily.

It localises to the cell membrane. It catalyses the reaction GTP + H2O = GDP + phosphate + H(+). Its function is as follows. Required for accurate and efficient protein synthesis under certain stress conditions. May act as a fidelity factor of the translation reaction, by catalyzing a one-codon backward translocation of tRNAs on improperly translocated ribosomes. Back-translocation proceeds from a post-translocation (POST) complex to a pre-translocation (PRE) complex, thus giving elongation factor G a second chance to translocate the tRNAs correctly. Binds to ribosomes in a GTP-dependent manner. The polypeptide is Elongation factor 4 (Limosilactobacillus fermentum (strain NBRC 3956 / LMG 18251) (Lactobacillus fermentum)).